The chain runs to 546 residues: Protein RDR1 (546 aa).

Residues 20–46 constitute a DNA-binding region (zn(2)-C6 fungal-type); that stretch reads CVPCRERKRKCNGKSPCEMCVAYGYVC.

It localises to the nucleus. Transcriptional repressor of multidrug resistance genes, such as PDR5. Required for growth on non-fermentable carbon sources like lactate or glycerol. The protein is Protein RDR1 (RDR1) of Saccharomyces cerevisiae (strain ATCC 204508 / S288c) (Baker's yeast).